The primary structure comprises 232 residues: Ubiquinone biosynthesis O-methyltransferase (232 aa).

S-adenosyl-L-methionine is bound by residues Arg36, Gly55, Asp76, and Leu120.

Belongs to the methyltransferase superfamily. UbiG/COQ3 family.

It carries out the reaction a 3-demethylubiquinol + S-adenosyl-L-methionine = a ubiquinol + S-adenosyl-L-homocysteine + H(+). The catalysed reaction is a 3-(all-trans-polyprenyl)benzene-1,2-diol + S-adenosyl-L-methionine = a 2-methoxy-6-(all-trans-polyprenyl)phenol + S-adenosyl-L-homocysteine + H(+). It participates in cofactor biosynthesis; ubiquinone biosynthesis. Functionally, O-methyltransferase that catalyzes the 2 O-methylation steps in the ubiquinone biosynthetic pathway. The chain is Ubiquinone biosynthesis O-methyltransferase from Stutzerimonas stutzeri (strain A1501) (Pseudomonas stutzeri).